A 173-amino-acid chain; its full sequence is Trafficking regulator of GLUT4 1 (173 aa).

Pro residues predominate over residues 1 to 10 (MANPAQPPLQ). Residues 1 to 20 (MANPAQPPLQDPGSTSPLEL) form a disordered region. Residues 1 to 102 (MANPAQPPLQ…QDQEAPKDYL (102 aa)) lie on the Cytoplasmic side of the membrane. Ser16, Ser43, Ser45, Ser70, Ser84, and Ser85 each carry phosphoserine. The segment at residues 103–123 (VLAIASCFCPVWPLNLIPLIF) is an intramembrane region (helical). At 124-150 (SIMSRSSVQQGDLDGARRLGRLARLLS) the chain is on the cytoplasmic side. Residues 151–171 (ITFIILGIVIIIVAVTVNFTV) traverse the membrane as a helical segment. The Extracellular segment spans residues 172-173 (PK).

It belongs to the CD225/Dispanin family. Interacts with SLC2A4; the interaction is required for proper SLC2A4 reacycling after insulin stimulation. Expressed specifically in white and brown adipose tissues.

Its subcellular location is the cell membrane. It is found in the endomembrane system. The protein resides in the cytoplasm. It localises to the perinuclear region. Regulates insulin-mediated adipose tissue glucose uptake and transport by modulation of SLC2A4 recycling. Not required for SLC2A4 membrane fusion upon an initial stimulus, but rather is necessary for proper protein recycling during prolonged insulin stimulation. This Mus musculus (Mouse) protein is Trafficking regulator of GLUT4 1 (Trarg1).